Consider the following 431-residue polypeptide: MNSKMEKLEKNVIKFEITVDESKFNEAVIKSYNKNRRRFNVPGFRKGKAPLNIIKNYYGVGVLYEDAINFCIDDTYPEVIKENDIHPVAYPEIDIVTLEEGKDFVYTAKVTVKPEVELGEYKGVEVTKVEYPVTDEDVENELKGMQEKNARIELKEDGEAVEKGDIAVIDFKGYVDDVAFEGGEGKDYSLEIGSGTFIDNFEDQLVGLKKDESKDVNVKFPEEYGKEELNGKPAKFEVTIKEIKRKELPALDDEFAKEVSEFDTLDEVKADIRSKMEKANEEKAKIEFEDKVVDAAVENAKIEIPEVMVKNETDQMLKELESRLRYQGLDLKSYYEYTNSSEEKVRDYMKETADKRVRTKLVMEKISEVEKVEATEEELKEKAKEMAQQYTNKDLDKMAELVLNSQRSMIEQDVINGKVIDLLVENAKVVE.

The 86-residue stretch at 164–249 (GDIAVIDFKG…IKEIKRKELP (86 aa)) folds into the PPIase FKBP-type domain.

It belongs to the FKBP-type PPIase family. Tig subfamily.

The protein localises to the cytoplasm. It catalyses the reaction [protein]-peptidylproline (omega=180) = [protein]-peptidylproline (omega=0). Its function is as follows. Involved in protein export. Acts as a chaperone by maintaining the newly synthesized protein in an open conformation. Functions as a peptidyl-prolyl cis-trans isomerase. The chain is Trigger factor from Clostridium acetobutylicum (strain ATCC 824 / DSM 792 / JCM 1419 / IAM 19013 / LMG 5710 / NBRC 13948 / NRRL B-527 / VKM B-1787 / 2291 / W).